A 544-amino-acid chain; its full sequence is CTP synthase (544 aa).

The interval 1 to 266 (MIRYIFITGG…DSEVLSHFGI (266 aa)) is amidoligase domain. S13 serves as a coordination point for CTP. Position 13 (S13) interacts with UTP. Residues 14 to 19 (SLGKGI) and D71 each bind ATP. Mg(2+) is bound by residues D71 and E140. CTP is bound by residues 147–149 (DIE), 187–192 (KTKPTQ), and K223. UTP contacts are provided by residues 187–192 (KTKPTQ) and K223. 239 to 241 (RDV) provides a ligand contact to ATP. Positions 292-543 (TIGLVGKYTD…IAAAVKQSRL (252 aa)) constitute a Glutamine amidotransferase type-1 domain. L-glutamine is bound at residue G355. C382 acts as the Nucleophile; for glutamine hydrolysis in catalysis. L-glutamine-binding positions include 383–386 (YGMQ), E406, and R471. Residues H516 and E518 contribute to the active site.

The protein belongs to the CTP synthase family. In terms of assembly, homotetramer.

It carries out the reaction UTP + L-glutamine + ATP + H2O = CTP + L-glutamate + ADP + phosphate + 2 H(+). The catalysed reaction is L-glutamine + H2O = L-glutamate + NH4(+). It catalyses the reaction UTP + NH4(+) + ATP = CTP + ADP + phosphate + 2 H(+). It participates in pyrimidine metabolism; CTP biosynthesis via de novo pathway; CTP from UDP: step 2/2. Allosterically activated by GTP, when glutamine is the substrate; GTP has no effect on the reaction when ammonia is the substrate. The allosteric effector GTP functions by stabilizing the protein conformation that binds the tetrahedral intermediate(s) formed during glutamine hydrolysis. Inhibited by the product CTP, via allosteric rather than competitive inhibition. Its function is as follows. Catalyzes the ATP-dependent amination of UTP to CTP with either L-glutamine or ammonia as the source of nitrogen. Regulates intracellular CTP levels through interactions with the four ribonucleotide triphosphates. This Hyphomonas neptunium (strain ATCC 15444) protein is CTP synthase.